A 259-amino-acid chain; its full sequence is Ribonuclease PH (259 aa).

Residues R88 and 126 to 128 (GTR) contribute to the phosphate site.

The protein belongs to the RNase PH family. As to quaternary structure, homohexameric ring arranged as a trimer of dimers.

The catalysed reaction is tRNA(n+1) + phosphate = tRNA(n) + a ribonucleoside 5'-diphosphate. Its function is as follows. Phosphorolytic 3'-5' exoribonuclease that plays an important role in tRNA 3'-end maturation. Removes nucleotide residues following the 3'-CCA terminus of tRNAs; can also add nucleotides to the ends of RNA molecules by using nucleoside diphosphates as substrates, but this may not be physiologically important. Probably plays a role in initiation of 16S rRNA degradation (leading to ribosome degradation) during starvation. This chain is Ribonuclease PH, found in Mycolicibacterium paratuberculosis (strain ATCC BAA-968 / K-10) (Mycobacterium paratuberculosis).